The chain runs to 187 residues: ATP synthase subunit b 2 (187 aa).

Positions 1 to 13 (MAESHATGTTTHT) are enriched in polar residues. Residues 1-21 (MAESHATGTTTHTEVPHGKPE) are disordered. The helical transmembrane segment at 31–53 (ASQLVSFAIAFALLYVIVSRFAL) threads the bilayer.

This sequence belongs to the ATPase B chain family. As to quaternary structure, F-type ATPases have 2 components, F(1) - the catalytic core - and F(0) - the membrane proton channel. F(1) has five subunits: alpha(3), beta(3), gamma(1), delta(1), epsilon(1). F(0) has three main subunits: a(1), b(2) and c(10-14). The alpha and beta chains form an alternating ring which encloses part of the gamma chain. F(1) is attached to F(0) by a central stalk formed by the gamma and epsilon chains, while a peripheral stalk is formed by the delta and b chains.

It localises to the cell inner membrane. F(1)F(0) ATP synthase produces ATP from ADP in the presence of a proton or sodium gradient. F-type ATPases consist of two structural domains, F(1) containing the extramembraneous catalytic core and F(0) containing the membrane proton channel, linked together by a central stalk and a peripheral stalk. During catalysis, ATP synthesis in the catalytic domain of F(1) is coupled via a rotary mechanism of the central stalk subunits to proton translocation. In terms of biological role, component of the F(0) channel, it forms part of the peripheral stalk, linking F(1) to F(0). The b'-subunit is a diverged and duplicated form of b found in plants and photosynthetic bacteria. The sequence is that of ATP synthase subunit b 2 (atpF2) from Afipia carboxidovorans (strain ATCC 49405 / DSM 1227 / KCTC 32145 / OM5) (Oligotropha carboxidovorans).